Consider the following 68-residue polypeptide: Peptide TsPep3 (68 aa).

Positions 1–26 (MKLSCGFLLIFLVLSAMIATFSEVEA) are cleaved as a signal peptide. 4 disulfide bridges follow: cysteine 30–cysteine 38, cysteine 33–cysteine 54, cysteine 37–cysteine 47, and cysteine 42–cysteine 52. Positions 56 to 68 (GRSDLNEEFENYQ) are excised as a propeptide.

In terms of tissue distribution, expressed by the venom gland.

The protein localises to the secreted. Its function is as follows. Probable weak potassium channel blocker. The chain is Peptide TsPep3 from Tityus serrulatus (Brazilian scorpion).